A 467-amino-acid polypeptide reads, in one-letter code: Glutamyl-tRNA reductase (467 aa).

Substrate is bound by residues 49-52 (TCNR), serine 109, 114-116 (EQQ), and glutamine 120. Cysteine 50 serves as the catalytic Nucleophile. 189 to 194 (GAGAMG) contacts NADP(+). The segment at 446–467 (GFSDTTRYGTSPAQSSSKYHAE) is disordered. The span at 447–467 (FSDTTRYGTSPAQSSSKYHAE) shows a compositional bias: polar residues.

It belongs to the glutamyl-tRNA reductase family. As to quaternary structure, homodimer.

The enzyme catalyses (S)-4-amino-5-oxopentanoate + tRNA(Glu) + NADP(+) = L-glutamyl-tRNA(Glu) + NADPH + H(+). The protein operates within porphyrin-containing compound metabolism; protoporphyrin-IX biosynthesis; 5-aminolevulinate from L-glutamyl-tRNA(Glu): step 1/2. In terms of biological role, catalyzes the NADPH-dependent reduction of glutamyl-tRNA(Glu) to glutamate 1-semialdehyde (GSA). This Mycobacterium leprae (strain TN) protein is Glutamyl-tRNA reductase.